Consider the following 146-residue polypeptide: ATP synthase epsilon chain (146 aa).

The interval 103–122 (SAKKRAEQHMQEAKEKHNER) is disordered.

The protein belongs to the ATPase epsilon chain family. As to quaternary structure, F-type ATPases have 2 components, CF(1) - the catalytic core - and CF(0) - the membrane proton channel. CF(1) has five subunits: alpha(3), beta(3), gamma(1), delta(1), epsilon(1). CF(0) has three main subunits: a, b and c.

It localises to the cell membrane. Functionally, produces ATP from ADP in the presence of a proton gradient across the membrane. This Lactobacillus johnsonii (strain CNCM I-12250 / La1 / NCC 533) protein is ATP synthase epsilon chain.